A 789-amino-acid chain; its full sequence is MAQQLPCVSSPRPLLAVPAGRWRAGVRGRPNVAGLGRGRLSLHAAAARPVAEAVQAEEDDDDDDEEVAEERFALGGACRVLAGMPAPLGATALRGGVNFAVYSSGASAASLCLFAPGDLKADRVTEEVPLDPLLNRTGNVWHVFIHGDQLHGMLYGYRFDGVFAPERGQYYDVSNVVVDPYAKAVVSRGEYGVPAPGGSCWPQMAGMIPLPYNKFDWQGDLPLGYHQKDLVIYEMHLRGFTKHNSSKTKHPGTYIGAVSKLDHLKELGVNCIELMPCHEFNELEYFSSSSKMNFWGYSTINFFSPMARYSSSGIRDSGCGAINEFKAFVREAHKRGIEVIMDVVFNHTAEGNEKGPILSFRGIDNSTYYMLAPKGEFYNYSGCGNTFNCNHPVVREFIVDCLRYWVTEMHVDGFRFDLASILTRGCSLWDPVNVYGSPMEGDMITTGTPLVAPPLIDMISNDPILGNVKLIAEAWDAGGLYQVGQFPHWNVWSEWNGKYRDTVRQFIKGTDGFAGAFAECLCGSPQLYQAGGRKPWHSINFVCAHDGFTLADLVTYNSKYNLSNGEDNRDGENHNLSWNCGEEGEFASLSVRRLRKRQMRNFFVCLMVSQGVPMFYMGDEYGHTKGGNNNTYCHDHYVNYFRWDKKEEQSSDLYRFCRLMTKFRKECESLGLEDFPTSERLKWHGHQPGKPDWSEASRFVAFTMKDETKGEIYVAFNTSHLPVVVGLPERSGFRWEPVVDTGKEAPYDFLTDGLPDRAVTVYQFSHFLNSNLYPMLSYSSIILVLRPDV.

The N-terminal 44 residues, 1–44, are a transit peptide targeting the chloroplast; it reads MAQQLPCVSSPRPLLAVPAGRWRAGVRGRPNVAGLGRGRLSLHA. The active-site Nucleophile is D417. The active-site Proton donor is E473.

It belongs to the glycosyl hydrolase 13 family.

The protein localises to the plastid. The protein resides in the chloroplast. It catalyses the reaction Hydrolysis of (1-&gt;6)-alpha-D-glucosidic branch linkages in glycogen, amylopectin and their beta-limit dextrins.. It participates in glycan biosynthesis; starch biosynthesis. Isoamylase starch-debranching enzyme involved in amylopectin biosynthesis in endosperm. Functions by removing excess branches or improper branches that interfere with the formation of double helices of the cluster chains of amylopectin and crystallization of starch. The chain is Isoamylase SU1, chloroplastic from Zea mays (Maize).